The chain runs to 81 residues: MKTLLLTLVVVTIVCLDLGYTMTCCNQQSSQPKTTTNCAGNSCYKKTWSDHRGTIIERGCGCPQVKSGIKLECCHTNECNN.

A signal peptide spans M1–T21. Disulfide bonds link C24–C43, C38–C60, C62–C73, and C74–C79.

This sequence belongs to the three-finger toxin family. Short-chain subfamily. Type I alpha-neurotoxin sub-subfamily. As to expression, expressed by the venom gland.

The protein resides in the secreted. Functionally, binds to muscle nicotinic acetylcholine receptor (nAChR) and inhibit acetylcholine from binding to the receptor, thereby impairing neuromuscular transmission. The protein is Short neurotoxin 2 of Hydrophis peronii (Spiny-headed seasnake).